Here is a 380-residue protein sequence, read N- to C-terminus: Cell division protein ZipA (380 aa).

At methionine 1–asparagine 7 the chain is on the periplasmic side. The helical transmembrane segment at valine 8–leucine 28 threads the bilayer. The Cytoplasmic segment spans residues arginine 29–glutamate 380.

This sequence belongs to the ZipA family. In terms of assembly, interacts with FtsZ via their C-terminal domains.

Its subcellular location is the cell inner membrane. Essential cell division protein that stabilizes the FtsZ protofilaments by cross-linking them and that serves as a cytoplasmic membrane anchor for the Z ring. Also required for the recruitment to the septal ring of downstream cell division proteins. The protein is Cell division protein ZipA of Colwellia psychrerythraea (strain 34H / ATCC BAA-681) (Vibrio psychroerythus).